Consider the following 427-residue polypeptide: V-type proton ATPase subunit C 2 (427 aa).

Residues 298 to 320 are disordered; that stretch reads PLGNPARPAAGQTDRDRESEGEG.

Belongs to the V-ATPase C subunit family. In terms of assembly, V-ATPase is a heteromultimeric enzyme made up of two complexes: the ATP-hydrolytic V1 complex and the proton translocation V0 complex. The V1 complex consists of three catalytic AB heterodimers that form a heterohexamer, three peripheral stalks each consisting of EG heterodimers, one central rotor including subunits D and F, and the regulatory subunits C and H. The proton translocation complex V0 consists of the proton transport subunit a, a ring of proteolipid subunits c9c'', rotary subunit d, subunits e and f, and the accessory subunits ATP6AP1/Ac45 and ATP6AP2/PRR. Predominantly expressed in the lung and kidney. Isoform 1 is lung-specific while isoform 3 is a kidney-specific isoform. Isoform 1 is localized in the lamellar bodies of type II alveolar cells. Isoform 2 is strongly expressed in the cortical and medulla collecting ducts and is found in the plasma membranes of renal alpha and beta intercalated cells.

Subunit of the V1 complex of vacuolar(H+)-ATPase (V-ATPase), a multisubunit enzyme composed of a peripheral complex (V1) that hydrolyzes ATP and a membrane integral complex (V0) that translocates protons. V-ATPase is responsible for acidifying and maintaining the pH of intracellular compartments and in some cell types, is targeted to the plasma membrane, where it is responsible for acidifying the extracellular environment. Subunit C is necessary for the assembly of the catalytic sector of the enzyme and is likely to have a specific function in its catalytic activity. The sequence is that of V-type proton ATPase subunit C 2 (Atp6v1c2) from Mus musculus (Mouse).